A 291-amino-acid chain; its full sequence is Protease HtpX (291 aa).

Transmembrane regions (helical) follow at residues 4–24 (IALF…VLNI) and 36–56 (LSGL…ISLM). Histidine 143 provides a ligand contact to Zn(2+). Residue glutamate 144 is part of the active site. Residue histidine 147 coordinates Zn(2+). 2 consecutive transmembrane segments (helical) span residues 151–171 (GDMI…IFLS) and 199–219 (FIVS…LTMW). Glutamate 225 is a Zn(2+) binding site.

The protein belongs to the peptidase M48B family. The cofactor is Zn(2+).

The protein localises to the cell inner membrane. This is Protease HtpX from Aliivibrio fischeri (strain ATCC 700601 / ES114) (Vibrio fischeri).